Reading from the N-terminus, the 884-residue chain is Translation initiation factor IF-2 (884 aa).

Disordered stretches follow at residues D42–V62 and E123–K254. Positions P194–A212 are enriched in basic and acidic residues. A compositionally biased stretch (low complexity) spans E234 to G248. In terms of domain architecture, tr-type G spans K384–K553. The G1 stretch occupies residues G393–T400. Residue G393–T400 coordinates GTP. The G2 stretch occupies residues G418–H422. Positions D439–G442 are G3. GTP-binding positions include D439–H443 and N493–D496. The interval N493–D496 is G4. Residues S529–K531 form a G5 region.

The protein belongs to the TRAFAC class translation factor GTPase superfamily. Classic translation factor GTPase family. IF-2 subfamily.

It is found in the cytoplasm. Its function is as follows. One of the essential components for the initiation of protein synthesis. Protects formylmethionyl-tRNA from spontaneous hydrolysis and promotes its binding to the 30S ribosomal subunits. Also involved in the hydrolysis of GTP during the formation of the 70S ribosomal complex. In Geobacter metallireducens (strain ATCC 53774 / DSM 7210 / GS-15), this protein is Translation initiation factor IF-2.